A 276-amino-acid chain; its full sequence is Protein HemX (276 aa).

The next 8 membrane-spanning stretches (helical) occupy residues 9 to 29 (LNEGTIVIYALSVLFYFIDFL), 40 to 60 (FWLLSIVWTLQTVYLAYFMWV), 66 to 86 (VLNVTEALYFYAWVLVTLSLV), 93 to 113 (VDFIVFFTNVIGFSMIAIHTF), 132 to 152 (LVIHITMAILSYGAFSLSFVF), 187 to 207 (VLNVIGVPMLLLSLILGVIWA), 217 to 237 (FDAKVLGSFVVLLLYSYYLYI), and 247 to 267 (VAALWNTACFLVLMINYFLLG).

This sequence to M.leprae U1620K.

It is found in the cell membrane. In terms of biological role, required for HemL synthesis. The protein is Protein HemX (hemX) of Bacillus subtilis (strain 168).